Consider the following 140-residue polypeptide: Nucleoside diphosphate kinase (140 aa).

The ATP site is built by lysine 11, phenylalanine 59, arginine 87, threonine 93, arginine 104, and asparagine 114. The Pros-phosphohistidine intermediate role is filled by histidine 117.

This sequence belongs to the NDK family. Homotetramer. Requires Mg(2+) as cofactor.

The protein localises to the cytoplasm. It carries out the reaction a 2'-deoxyribonucleoside 5'-diphosphate + ATP = a 2'-deoxyribonucleoside 5'-triphosphate + ADP. The enzyme catalyses a ribonucleoside 5'-diphosphate + ATP = a ribonucleoside 5'-triphosphate + ADP. Its function is as follows. Major role in the synthesis of nucleoside triphosphates other than ATP. The ATP gamma phosphate is transferred to the NDP beta phosphate via a ping-pong mechanism, using a phosphorylated active-site intermediate. The sequence is that of Nucleoside diphosphate kinase from Rhizobium meliloti (strain 1021) (Ensifer meliloti).